The sequence spans 440 residues: Probable D-serine dehydratase (440 aa).

At K111 the chain carries N6-(pyridoxal phosphate)lysine.

It belongs to the serine/threonine dehydratase family. DsdA subfamily. Pyridoxal 5'-phosphate is required as a cofactor.

The catalysed reaction is D-serine = pyruvate + NH4(+). This Rhizobium leguminosarum bv. trifolii (strain WSM2304) protein is Probable D-serine dehydratase.